Reading from the N-terminus, the 161-residue chain is Decarboxylase (161 aa).

An EthD domain is found at 29-131; sequence QGMSEEAYRK…VGDHENFADT (103 aa).

This sequence belongs to the tpcK family.

The enzyme catalyses atrochrysone carboxylate + H(+) = atrochrysone + CO2. It participates in secondary metabolite biosynthesis. In terms of biological role, decarboxylase; part of the gene cluster that mediates the biosynthesis of monodictyphenone, a prenyl xanthone derivative. The pathway begins with the synthesis of atrochrysone thioester by the polyketide synthase (PKS) mdpG. The atrochrysone carboxyl ACP thioesterase mdpF then breaks the thioester bond and releases the atrochrysone carboxylic acid from mdpG. The atrochrysone carboxylic acid is then converted to atrochrysone which is further transformed into emodin anthrone by mdpH-1 and mdpH-2. Emodin is further modified to yield monodictyphenone via several steps involving mdpB, mdpC mdpJ, mdpK and mdpL. These enzymes with xptA, xptB and xptC are also proposed to be involved in the synthesis of shamixanthone from emodin. Especially, direct reduction of emodin by the short chain dehydrogenase mdpC followed by dehydration catalyzed by the scytalone dehydratase-like protein mdpB gives loss of oxygen and formation of chrysophanol intermediate in two simple steps. This Emericella nidulans (strain FGSC A4 / ATCC 38163 / CBS 112.46 / NRRL 194 / M139) (Aspergillus nidulans) protein is Decarboxylase.